A 207-amino-acid polypeptide reads, in one-letter code: dTTP/UTP pyrophosphatase (207 aa).

Catalysis depends on Asp-87, which acts as the Proton acceptor.

The protein belongs to the Maf family. YhdE subfamily. The cofactor is a divalent metal cation.

It is found in the cytoplasm. It carries out the reaction dTTP + H2O = dTMP + diphosphate + H(+). The enzyme catalyses UTP + H2O = UMP + diphosphate + H(+). Its function is as follows. Nucleoside triphosphate pyrophosphatase that hydrolyzes dTTP and UTP. May have a dual role in cell division arrest and in preventing the incorporation of modified nucleotides into cellular nucleic acids. The chain is dTTP/UTP pyrophosphatase from Nitrosomonas europaea (strain ATCC 19718 / CIP 103999 / KCTC 2705 / NBRC 14298).